Here is a 243-residue protein sequence, read N- to C-terminus: Biosynthetic peptidoglycan transglycosylase (243 aa).

The chain crosses the membrane as a helical span at residues 21–43; sequence LLIVSLVSALMSVLQVIVFRFVD.

The protein belongs to the glycosyltransferase 51 family.

It is found in the cell inner membrane. It carries out the reaction [GlcNAc-(1-&gt;4)-Mur2Ac(oyl-L-Ala-gamma-D-Glu-L-Lys-D-Ala-D-Ala)](n)-di-trans,octa-cis-undecaprenyl diphosphate + beta-D-GlcNAc-(1-&gt;4)-Mur2Ac(oyl-L-Ala-gamma-D-Glu-L-Lys-D-Ala-D-Ala)-di-trans,octa-cis-undecaprenyl diphosphate = [GlcNAc-(1-&gt;4)-Mur2Ac(oyl-L-Ala-gamma-D-Glu-L-Lys-D-Ala-D-Ala)](n+1)-di-trans,octa-cis-undecaprenyl diphosphate + di-trans,octa-cis-undecaprenyl diphosphate + H(+). It functions in the pathway cell wall biogenesis; peptidoglycan biosynthesis. Peptidoglycan polymerase that catalyzes glycan chain elongation from lipid-linked precursors. The chain is Biosynthetic peptidoglycan transglycosylase from Xylella fastidiosa (strain Temecula1 / ATCC 700964).